The primary structure comprises 449 residues: C4-dicarboxylate transport protein (449 aa).

The next 9 membrane-spanning stretches (helical) occupy residues 5–25 (AVFK…VSLG), 45–65 (LIKM…IAGM), 77–97 (LAVL…LIVV), 149–169 (GDML…HSFG), 185–205 (VLFG…FGAM), 231–251 (CVIF…FSII), 298–318 (GYSF…VFIA), 332–352 (TLLV…GSGF), and 353–373 (IVLA…LALI).

This sequence belongs to the dicarboxylate/amino acid:cation symporter (DAACS) (TC 2.A.23) family.

The protein resides in the cell inner membrane. Responsible for the transport of dicarboxylates such as succinate, fumarate, and malate from the periplasm across the membrane. This is C4-dicarboxylate transport protein from Dechloromonas aromatica (strain RCB).